The chain runs to 353 residues: MFYWLYRHLEINILQYISVRAGISFFIAFVLTMYLMPKFIRWARAKKASQPIYELAPENHKIKAGTPTMGGVVFIFSTIIATVLTAKLNNFYIVGGILTLALFSLIGIQDDYSKISKEKNSAGLTPRMKLIFQFLCAASIAGILFLYGHSTELFTPFYKFPLFEMGVFGIVFWMFVIVGSSNAVNLTDGLDGLATVPSILAFSTLSILVYVVGHAVFANYLLFPNIQIAGELAIMGSAICGALIAFLWFNSHPAEVFMGDSGSLPLGAFMGYLAIVAKSEILLLAIGFIFVWETVSVILQVGSYKLRQKRVFLMAPIHHHFEQKGWKENKIIVRFWIIAFMSNLIALLSLKIR.

10 helical membrane passes run 16–36 (YISV…MYLM), 64–84 (AGTP…ATVL), 88–108 (LNNF…LIGI), 130–150 (LIFQ…YGHS), 160–180 (FPLF…IVGS), 198–218 (SILA…AVFA), 228–248 (IAGE…AFLW), 256–276 (VFMG…LAIV), 281–301 (ILLL…ILQV), and 330–350 (KIIV…LLSL).

Belongs to the glycosyltransferase 4 family. MraY subfamily. Requires Mg(2+) as cofactor.

It is found in the cell inner membrane. The enzyme catalyses UDP-N-acetyl-alpha-D-muramoyl-L-alanyl-gamma-D-glutamyl-meso-2,6-diaminopimeloyl-D-alanyl-D-alanine + di-trans,octa-cis-undecaprenyl phosphate = di-trans,octa-cis-undecaprenyl diphospho-N-acetyl-alpha-D-muramoyl-L-alanyl-D-glutamyl-meso-2,6-diaminopimeloyl-D-alanyl-D-alanine + UMP. It participates in cell wall biogenesis; peptidoglycan biosynthesis. In terms of biological role, catalyzes the initial step of the lipid cycle reactions in the biosynthesis of the cell wall peptidoglycan: transfers peptidoglycan precursor phospho-MurNAc-pentapeptide from UDP-MurNAc-pentapeptide onto the lipid carrier undecaprenyl phosphate, yielding undecaprenyl-pyrophosphoryl-MurNAc-pentapeptide, known as lipid I. This is Phospho-N-acetylmuramoyl-pentapeptide-transferase from Aliarcobacter butzleri (strain RM4018) (Arcobacter butzleri).